Consider the following 390-residue polypeptide: Chorismate synthase (390 aa).

Arginine 39 and arginine 45 together coordinate NADP(+). FMN is bound by residues 132-134, 253-254, glycine 298, 313-317, and arginine 339; these read RSS, NA, and KPIPT.

It belongs to the chorismate synthase family. In terms of assembly, homotetramer. Requires FMNH2 as cofactor.

It catalyses the reaction 5-O-(1-carboxyvinyl)-3-phosphoshikimate = chorismate + phosphate. It participates in metabolic intermediate biosynthesis; chorismate biosynthesis; chorismate from D-erythrose 4-phosphate and phosphoenolpyruvate: step 7/7. In terms of biological role, catalyzes the anti-1,4-elimination of the C-3 phosphate and the C-6 proR hydrogen from 5-enolpyruvylshikimate-3-phosphate (EPSP) to yield chorismate, which is the branch point compound that serves as the starting substrate for the three terminal pathways of aromatic amino acid biosynthesis. This reaction introduces a second double bond into the aromatic ring system. This is Chorismate synthase from Bacillus velezensis (strain DSM 23117 / BGSC 10A6 / LMG 26770 / FZB42) (Bacillus amyloliquefaciens subsp. plantarum).